The primary structure comprises 197 residues: Peptide deformylase (197 aa).

2 residues coordinate Fe cation: cysteine 106 and histidine 148. Glutamate 149 is an active-site residue. Histidine 152 lines the Fe cation pocket.

The protein belongs to the polypeptide deformylase family. It depends on Fe(2+) as a cofactor.

The catalysed reaction is N-terminal N-formyl-L-methionyl-[peptide] + H2O = N-terminal L-methionyl-[peptide] + formate. Its function is as follows. Removes the formyl group from the N-terminal Met of newly synthesized proteins. Requires at least a dipeptide for an efficient rate of reaction. N-terminal L-methionine is a prerequisite for activity but the enzyme has broad specificity at other positions. This Mycolicibacterium paratuberculosis (strain ATCC BAA-968 / K-10) (Mycobacterium paratuberculosis) protein is Peptide deformylase.